Consider the following 206-residue polypeptide: Reticulon-like protein B13 (206 aa).

Residues 16 to 206 form the Reticulon domain; it reads VEDIYLWRRK…GTEEKVKKSE (191 aa). 3 consecutive transmembrane segments (helical) span residues 27 to 47, 50 to 70, and 134 to 154; these read LAFSTLLVSTSTWILLSFYGF, ITIVSWIGIAVVSMIFLWGSL, and IGNLLDFHTCLFIGLVMGLTV.

It localises to the endoplasmic reticulum membrane. In Arabidopsis thaliana (Mouse-ear cress), this protein is Reticulon-like protein B13 (RTNLB13).